A 332-amino-acid chain; its full sequence is Probable allantoicase (332 aa).

It belongs to the allantoicase family.

The enzyme catalyses allantoate + H2O = (S)-ureidoglycolate + urea. The protein operates within nitrogen metabolism; (S)-allantoin degradation; (S)-ureidoglycolate from allantoate (aminidohydrolase route): step 1/1. The protein is Probable allantoicase of Pseudomonas aeruginosa (strain UCBPP-PA14).